The sequence spans 84 residues: Defensin-like protein 37 (84 aa).

An N-terminal signal peptide occupies residues 1–24 (MAVKLIYLFLFLYIALLISGRTMS). Cystine bridges form between cysteine 46-cysteine 67, cysteine 52-cysteine 79, and cysteine 56-cysteine 81.

This sequence belongs to the DEFL family.

It localises to the secreted. This Arabidopsis thaliana (Mouse-ear cress) protein is Defensin-like protein 37 (EDA21).